An 83-amino-acid chain; its full sequence is Turripeptide Lol11.2 (83 aa).

Positions methionine 1 to threonine 27 are cleaved as a signal peptide.

Belongs to the conopeptide I2-like superfamily. In terms of processing, contains 4 disulfide bonds. In terms of tissue distribution, expressed by the venom duct.

Its subcellular location is the secreted. Its function is as follows. Acts as a neurotoxin by inhibiting voltage-gated potassium channels (Kv). The polypeptide is Turripeptide Lol11.2 (Iotyrris olangoensis (Sea snail)).